Reading from the N-terminus, the 596-residue chain is Aspartate--tRNA(Asp/Asn) ligase (596 aa).

Glu-175 serves as a coordination point for L-aspartate. Residues Gln-199–Lys-202 form an aspartate region. The L-aspartate site is built by Arg-221 and His-454. Arg-221–Glu-223 is an ATP binding site. Position 488 (Glu-488) interacts with ATP. Arg-495 is a binding site for L-aspartate. An ATP-binding site is contributed by Gly-540–Arg-543.

The protein belongs to the class-II aminoacyl-tRNA synthetase family. Type 1 subfamily. As to quaternary structure, homodimer.

The protein localises to the cytoplasm. It carries out the reaction tRNA(Asx) + L-aspartate + ATP = L-aspartyl-tRNA(Asx) + AMP + diphosphate. Functionally, aspartyl-tRNA synthetase with relaxed tRNA specificity since it is able to aspartylate not only its cognate tRNA(Asp) but also tRNA(Asn). Reaction proceeds in two steps: L-aspartate is first activated by ATP to form Asp-AMP and then transferred to the acceptor end of tRNA(Asp/Asn). This Bartonella henselae (strain ATCC 49882 / DSM 28221 / CCUG 30454 / Houston 1) (Rochalimaea henselae) protein is Aspartate--tRNA(Asp/Asn) ligase.